The chain runs to 877 residues: Leucine--tRNA ligase (877 aa).

The short motif at 43–53 (PYPSGRIHMGH) is the 'HIGH' region element. The 'KMSKS' region motif lies at 628–632 (KMSKS). Residue Lys631 participates in ATP binding.

It belongs to the class-I aminoacyl-tRNA synthetase family.

It localises to the cytoplasm. It carries out the reaction tRNA(Leu) + L-leucine + ATP = L-leucyl-tRNA(Leu) + AMP + diphosphate. The sequence is that of Leucine--tRNA ligase from Brucella canis (strain ATCC 23365 / NCTC 10854 / RM-666).